A 315-amino-acid polypeptide reads, in one-letter code: Large ribosomal subunit protein uL10 (315 aa).

Residues 285-294 are compositionally biased toward low complexity; it reads AAAPAASAAP. The disordered stretch occupies residues 285 to 315; sequence AAAPAASAAPAKEEKEESEESDDDMGFGLFD. Positions 300–309 are enriched in acidic residues; sequence EESEESDDDM.

The protein belongs to the universal ribosomal protein uL10 family. P0 forms a pentameric complex by interaction with dimers of P1 and P2. Phosphorylated.

Its function is as follows. Ribosomal protein P0 is the functional equivalent of E.coli protein L10. The sequence is that of Large ribosomal subunit protein uL10 (RPLP0) from Lithobates sylvaticus (Wood frog).